An 888-amino-acid chain; its full sequence is Valine--tRNA ligase (888 aa).

Positions 43–53 match the 'HIGH' region motif; it reads PNVTGTLHLGH. The 'KMSKS' region signature appears at 538–542; sequence KMSKS. Lysine 541 serves as a coordination point for ATP. Residues 821–888 adopt a coiled-coil conformation; it reads LIDLDAERAR…RLKAALGRLA (68 aa).

It belongs to the class-I aminoacyl-tRNA synthetase family. ValS type 1 subfamily. Monomer.

The protein localises to the cytoplasm. It carries out the reaction tRNA(Val) + L-valine + ATP = L-valyl-tRNA(Val) + AMP + diphosphate. Its function is as follows. Catalyzes the attachment of valine to tRNA(Val). As ValRS can inadvertently accommodate and process structurally similar amino acids such as threonine, to avoid such errors, it has a 'posttransfer' editing activity that hydrolyzes mischarged Thr-tRNA(Val) in a tRNA-dependent manner. In Gluconobacter oxydans (strain 621H) (Gluconobacter suboxydans), this protein is Valine--tRNA ligase.